Reading from the N-terminus, the 420-residue chain is Histidine--tRNA ligase (420 aa).

It belongs to the class-II aminoacyl-tRNA synthetase family. In terms of assembly, homodimer.

Its subcellular location is the cytoplasm. The catalysed reaction is tRNA(His) + L-histidine + ATP = L-histidyl-tRNA(His) + AMP + diphosphate + H(+). The sequence is that of Histidine--tRNA ligase from Thermodesulfovibrio yellowstonii (strain ATCC 51303 / DSM 11347 / YP87).